The primary structure comprises 897 residues: Cytokine receptor common subunit beta (897 aa).

The first 16 residues, 1-16 (MVLAQGLLSMALLALC), serve as a signal peptide directing secretion. At 17-443 (WERSLAGAEE…WDTESVLPMW (427 aa)) the chain is on the extracellular side. A disulfide bridge connects residues Cys-35 and Cys-45. An N-linked (GlcNAc...) asparagine glycan is attached at Asn-58. Disulfide bonds link Cys-75-Cys-96 and Cys-86-Cys-91. The Fibronectin type-III 1 domain occupies 133 to 240 (PPEPRDLQIS…PEVCWDSQPG (108 aa)). Asn-191 is a glycosylation site (N-linked (GlcNAc...) asparagine). Intrachain disulfides connect Cys-250-Cys-260 and Cys-289-Cys-306. Residues 339–436 (QMAPPSLNVT…EWSEARSWDT (98 aa)) enclose the Fibronectin type-III 2 domain. A glycan (N-linked (GlcNAc...) asparagine) is linked at Asn-346. Residues 425 to 429 (WSEWS) carry the WSXWS motif motif. The helical transmembrane segment at 444 to 460 (VLALIVIFLTIAVLLAL) threads the bilayer. Residues 461 to 897 (RFCGIYGYRL…WEVNKPGEVC (437 aa)) are Cytoplasmic-facing. The Box 1 motif motif lies at 474-482 (WEEKIPNPS). Disordered regions lie at residues 498 to 517 (GSMS…WGSR), 532 to 630 (SEVS…EYLC), 648 to 812 (PGQA…QPEG), and 830 to 849 (PGPL…PEIK). Residues 564 to 574 (EQPPSPQPGPP) are compositionally biased toward pro residues. A compositionally biased stretch (low complexity) spans 723–752 (SGASSVSLVPSLGLPSDQTPSLCPGLASGP). Tyr-766 carries the phosphotyrosine modification. Residues 830–840 (PGPLSLRSKPS) show a composition bias toward low complexity.

The protein belongs to the type I cytokine receptor family. Type 4 subfamily. In terms of assembly, heterodimer of an alpha and a beta subunit. The beta subunit is common to the IL3, IL5 and GM-CSF receptors. The signaling GM-CSF receptor complex is a dodecamer of two head-to-head hexamers of two alpha, two beta, and two ligand subunits. Interacts with TMEM102; this interaction occurs preferentially in the absence of CSF2. Interacts with FCER1G; this interaction is direct. Interacts with LYN. Interacts with JAK1. May be phosphorylated by LYN.

The protein resides in the membrane. Functionally, cell surface receptor that plays a role in immune response and controls the production and differentiation of hematopoietic progenitor cells into lineage-restricted cells. Acts by forming an heterodimeric receptor through interaction with different partners such as IL3RA, IL5RA or CSF2RA. In turn, participates in various signaling pathways including interleukin-3, interleukin-5 and granulocyte-macrophage colony-stimulating factor/CSF2 pathways. In unstimulated conditions, interacts constitutively with JAK1 and ligand binding leads to JAK1 stimulation and subsequent activation of the JAK-STAT pathway. The sequence is that of Cytokine receptor common subunit beta (CSF2RB) from Homo sapiens (Human).